Here is a 478-residue protein sequence, read N- to C-terminus: Monocarboxylate transporter 2 (478 aa).

The Cytoplasmic portion of the chain corresponds to 1-15; the sequence is MPPMPSAPPVHPPPD. The helical transmembrane segment at 16–36 threads the bilayer; that stretch reads GGWGWIVVGAAFISIGFSYAF. The Extracellular portion of the chain corresponds to 37-59; sequence PKAVTVFFKEIQQIFHTTYSEIA. Residues 60–80 traverse the membrane as a helical segment; sequence WISSIMLAVMYAGGPVSSVLV. The Cytoplasmic segment spans residues 81–89; the sequence is NKYGSRPVV. The helical transmembrane segment at 90–110 threads the bilayer; it reads IAGGLLCCLGMVLASFSSSVV. Residues 111–115 are Extracellular-facing; that stretch reads QLYLT. A helical membrane pass occupies residues 116–136; it reads MGFITGLGLAFNLQPALTIIG. The Cytoplasmic portion of the chain corresponds to 137–148; the sequence is KYFYRKRPMANG. A helical transmembrane segment spans residues 149–169; that stretch reads LAMAGSPVFLSSLAPFNQYLF. The Extracellular segment spans residues 170–173; it reads NTFG. Residues 174–194 traverse the membrane as a helical segment; that stretch reads WKGSFLILGSLLLNACVAGSL. Over 195–246 the chain is Cytoplasmic; sequence MRPLGPNQTTSKSKNKTGKTEDDSSPKKIKTKKSTWEKVNKYLDFSLFKHRG. Residues 200-224 form a disordered region; sequence PNQTTSKSKNKTGKTEDDSSPKKIK. A helical transmembrane segment spans residues 247–267; it reads FLIYLSGNVIMFLGFFAPIIF. Topologically, residues 268 to 282 are extracellular; that stretch reads LAPYAKDQGIDEYSA. A helical membrane pass occupies residues 283–303; it reads AFLLSVMAFVDMFARPSVGLI. Residues 304–312 lie on the Cytoplasmic side of the membrane; the sequence is ANSKYIRPR. The chain crosses the membrane as a helical span at residues 313-333; the sequence is IQYFFSFAIMFNGVCHLLCPL. The Extracellular portion of the chain corresponds to 334 to 338; that stretch reads AQDYT. Residues 339–359 form a helical membrane-spanning segment; it reads SLVLYAVFFGLGFGSVSSVLF. Topologically, residues 360-373 are cytoplasmic; it reads ETLMDLVGAPRFSS. Residues 374-394 traverse the membrane as a helical segment; that stretch reads AVGLVTIVECGPVLLGPPLAG. Residues 395 to 406 lie on the Extracellular side of the membrane; the sequence is KLVDLTGEYKYM. A helical transmembrane segment spans residues 407–427; that stretch reads YMSCGAIVVAASVWLLIGNAI. The Cytoplasmic portion of the chain corresponds to 428 to 478; it reads NYRLLAKERKEENARQKTRESEPLSKSKHSEDVNVKVSNAQSVTSERETNI. A compositionally biased stretch (basic and acidic residues) spans 437 to 461; that stretch reads KEENARQKTRESEPLSKSKHSEDVN. The segment at 437 to 478 is disordered; the sequence is KEENARQKTRESEPLSKSKHSEDVNVKVSNAQSVTSERETNI.

Belongs to the major facilitator superfamily. Monocarboxylate porter (TC 2.A.1.13) family. In terms of assembly, homodimer. Interacts with GRID2IP. Interacts with EMB; interaction mediates SLC16A7 targeting to the plasma membrane. Interacts with isoform 2 of BSG. In terms of tissue distribution, detected in heart and in blood lymphocytes and monocytes (at protein level). High expression in testis, moderate to low in spleen, heart, kidney, pancreas, skeletal muscle, brain and leukocyte. Restricted expression in normal tissues, but widely expressed in cancer cells.

It is found in the cell membrane. The protein localises to the basolateral cell membrane. The protein resides in the cytoplasm. It catalyses the reaction pyruvate(out) + H(+)(out) = pyruvate(in) + H(+)(in). The catalysed reaction is 3-methyl-2-oxobutanoate(out) + H(+)(out) = 3-methyl-2-oxobutanoate(in) + H(+)(in). The enzyme catalyses (S)-lactate(in) + H(+)(in) = (S)-lactate(out) + H(+)(out). It carries out the reaction acetoacetate(out) + H(+)(out) = acetoacetate(in) + H(+)(in). It catalyses the reaction (R)-3-hydroxybutanoate(out) + H(+)(out) = (R)-3-hydroxybutanoate(in) + H(+)(in). The catalysed reaction is 4-methyl-2-oxopentanoate(out) + H(+)(out) = 4-methyl-2-oxopentanoate(in) + H(+)(in). The enzyme catalyses (S)-3-hydroxybutanoate(out) + H(+)(out) = (S)-3-hydroxybutanoate(in) + H(+)(in). Transport activity exhibits steep dependence on substrate concentration. Substrate concentration sensitivity of SLC16A7 arises from the strong inter-subunit cooperativity of the SLC16A7 dimer during transport. Inhibited by AR-C155858. Its function is as follows. Proton-coupled monocarboxylate symporter. Catalyzes the rapid transport across the plasma membrane of monocarboxylates such as L-lactate, pyruvate and ketone bodies, acetoacetate, beta-hydroxybutyrate and acetate. Dimerization is functionally required and both subunits work cooperatively in transporting substrate. The protein is Monocarboxylate transporter 2 of Homo sapiens (Human).